A 561-amino-acid polypeptide reads, in one-letter code: MRHCINCCVQLFPEDTHKQQVACQGGPHHSHQACPTCKGENKILFRVDSKQMNLLAVLEVRTEGNENWGGFLRFRKGKRCSLVFGLIIMTLVMASYILSGAHQELLISSPFHYGGFPSNPSVMDGENPSDVKEHHYQPSVNNISYVKDYPSIKLIIDSIAARIEFTTRQLPDLQDLKRQELHMFSVIPSKFLPTSKSPCWYEEFSGRNTTDPYLTNSYVLYSKRFRSTFDALRKVFWGHLSHVQGKHFRLRCLPHFYIIGQPKCGTTDLYDRLRLHPEVKFSAIKEPHWWTRKRFGIVRLRDGLRDRYPVEDYLDLFDLAAHQIHQGLQAASAEQPSKMNKIIIGEASASTMWDNNAWTFFYDNSTDGEPPFLTQDFIHAFQPEAKLIVMLRDPVERLYSDYLYFASSNKSADDFHEKVTEALQLFENCMLDYSLRACVYNNTLNNAMPVRLQVGLYAVYLLDWLTVFSKEQFLILRLEDHASNVKYTMHKVFQFLNLGPLSEKQEALMTKSPASNTRRPEDRSLGPMWPITQKILREFYGPFNTRLAQVLDDEAFAWKTT.

Residues 1-80 lie on the Cytoplasmic side of the membrane; the sequence is MRHCINCCVQ…FLRFRKGKRC (80 aa). The helical; Signal-anchor for type II membrane protein transmembrane segment at 81–101 threads the bilayer; it reads SLVFGLIIMTLVMASYILSGA. The Lumenal portion of the chain corresponds to 102 to 561; sequence HQELLISSPF…DDEAFAWKTT (460 aa). 3'-phosphoadenylyl sulfate is bound at residue 263 to 267; that stretch reads KCGTT. An N-linked (GlcNAc...) asparagine glycan is attached at N364. 2 residues coordinate 3'-phosphoadenylyl sulfate: R392 and S400.

It belongs to the sulfotransferase 1 family. As to quaternary structure, homodimer; disulfide-linked (Potential). The relevance of homodimerization is however unsure. May interact with phosphorylated proteins in resting B-cells, including HCK. A divalent metal cation serves as cofactor. It depends on glutathione as a cofactor. Post-translationally, glycosylated.

It is found in the golgi apparatus membrane. The enzyme catalyses dermatan 4'-sulfate + n 3'-phosphoadenylyl sulfate = dermatan 4',6'-bissulfate + n adenosine 3',5'-bisphosphate + n H(+). The catalysed reaction is chondroitin 4'-sulfate + n 3'-phosphoadenylyl sulfate = chondroitin 4',6'-bissulfate + n adenosine 3',5'-bisphosphate + n H(+). Inhibited by phenyl beta-GalNAc(4,6-SO(4)). In terms of biological role, sulfotransferase that transfers sulfate from 3'-phosphoadenosine 5'-phosphosulfate (PAPS) to the C-6 hydroxyl group of the GalNAc 4-sulfate residue of chondroitin sulfate A and forms chondroitin sulfate E containing GlcA-GalNAc(4,6-SO(4)) repeating units. It also transfers sulfate to a unique non-reducing terminal sequence, GalNAc(4SO4)-GlcA(2SO4)-GalNAc(6SO4), to yield a highly sulfated structure similar to the structure found in thrombomodulin chondroitin sulfate. May also act as a B-cell receptor involved in BCR ligation-mediated early activation that mediate regulatory signals key to B-cell development and/or regulation of B-cell-specific RAG expression; however such results are unclear in vivo. This Mus musculus (Mouse) protein is Carbohydrate sulfotransferase 15 (Chst15).